We begin with the raw amino-acid sequence, 550 residues long: Warthog protein 8 (550 aa).

The N-terminal stretch at 1–19 (MNYLLLVSGLLSVWQPVFG) is a signal peptide.

It belongs to the hedgehog family. The C-terminal domain displays an autoproteolysis activity.

The protein resides in the secreted. Its subcellular location is the cell surface. The protein localises to the cell membrane. It localises to the extracellular space. Functionally, intercellular signal essential for a variety of patterning events during development. The polypeptide is Warthog protein 8 (wrt-8) (Caenorhabditis elegans).